Here is a 343-residue protein sequence, read N- to C-terminus: tRNA N6-adenosine threonylcarbamoyltransferase (343 aa).

Residues histidine 120 and histidine 124 each coordinate Fe cation. Substrate is bound by residues valine 142–glycine 146, aspartate 175, glycine 188, aspartate 192, and asparagine 281. Residue aspartate 310 coordinates Fe cation.

The protein belongs to the KAE1 / TsaD family. Fe(2+) is required as a cofactor.

The protein resides in the cytoplasm. It catalyses the reaction L-threonylcarbamoyladenylate + adenosine(37) in tRNA = N(6)-L-threonylcarbamoyladenosine(37) in tRNA + AMP + H(+). Its function is as follows. Required for the formation of a threonylcarbamoyl group on adenosine at position 37 (t(6)A37) in tRNAs that read codons beginning with adenine. Is involved in the transfer of the threonylcarbamoyl moiety of threonylcarbamoyl-AMP (TC-AMP) to the N6 group of A37, together with TsaE and TsaB. TsaD likely plays a direct catalytic role in this reaction. This chain is tRNA N6-adenosine threonylcarbamoyltransferase, found in Bacillus cereus (strain ATCC 10987 / NRS 248).